Consider the following 269-residue polypeptide: Seven in absentia homolog 3 (269 aa).

An SIAH-type; degenerate zinc finger spans residues 61–132 (GSFHPHHLSH…VVPHLRQIHR (72 aa)). Zn(2+) is bound by residues C107, C114, H126, and H131.

It belongs to the SINA (Seven in absentia) family.

The protein localises to the mitochondrion. Functionally, negative regulator of PRKN translocation to damaged mitochondria. Acts probably by destabilizing PINK1 protein, hence inhibiting PRKN targeting to dysfunctional depolarized mitochondria. The protein is Seven in absentia homolog 3 (SIAH3) of Homo sapiens (Human).